A 123-amino-acid chain; its full sequence is Putative iron-sulfur cluster insertion protein ErpA (123 aa).

Cysteine 51, cysteine 115, and cysteine 117 together coordinate iron-sulfur cluster.

It belongs to the HesB/IscA family. In terms of assembly, homodimer. It depends on iron-sulfur cluster as a cofactor.

Required for insertion of 4Fe-4S clusters. The sequence is that of Putative iron-sulfur cluster insertion protein ErpA from Bordetella avium (strain 197N).